A 145-amino-acid polypeptide reads, in one-letter code: D-aminoacyl-tRNA deacylase (145 aa).

Residues 137-138 carry the Gly-cisPro motif, important for rejection of L-amino acids motif; the sequence is GP.

The protein belongs to the DTD family. Homodimer.

The protein resides in the cytoplasm. The enzyme catalyses glycyl-tRNA(Ala) + H2O = tRNA(Ala) + glycine + H(+). It carries out the reaction a D-aminoacyl-tRNA + H2O = a tRNA + a D-alpha-amino acid + H(+). Its function is as follows. An aminoacyl-tRNA editing enzyme that deacylates mischarged D-aminoacyl-tRNAs. Also deacylates mischarged glycyl-tRNA(Ala), protecting cells against glycine mischarging by AlaRS. Acts via tRNA-based rather than protein-based catalysis; rejects L-amino acids rather than detecting D-amino acids in the active site. By recycling D-aminoacyl-tRNA to D-amino acids and free tRNA molecules, this enzyme counteracts the toxicity associated with the formation of D-aminoacyl-tRNA entities in vivo and helps enforce protein L-homochirality. In Escherichia coli O81 (strain ED1a), this protein is D-aminoacyl-tRNA deacylase.